Here is a 477-residue protein sequence, read N- to C-terminus: Multidrug resistance protein PmpM (477 aa).

12 helical membrane-spanning segments follow: residues 21 to 41 (LLTL…MGFV), 56 to 76 (AVAL…GTLL), 104 to 124 (LALL…EPIL), 133 to 153 (LIGP…AAAL), 171 to 191 (MVLG…LIYG), 202 to 222 (GCGW…LFWV), 253 to 273 (LPIG…ALLI), 286 to 306 (IALN…MAVT), 326 to 346 (GVGM…MLLL), 360 to 380 (VIAI…SDAL), 398 to 418 (MIMT…SLGL), and 431 to 451 (LWQG…IRLA).

Belongs to the multi antimicrobial extrusion (MATE) (TC 2.A.66.1) family.

Its subcellular location is the cell inner membrane. Its function is as follows. Multidrug efflux pump that functions as an H(+)/drug antiporter. Confers resistance to benzalkonium chloride, fluoroquinolones, ethidium bromide, acriflavine and tetraphenylphosphonium chloride. The protein is Multidrug resistance protein PmpM (pmpM) of Pseudomonas aeruginosa (strain ATCC 15692 / DSM 22644 / CIP 104116 / JCM 14847 / LMG 12228 / 1C / PRS 101 / PAO1).